Reading from the N-terminus, the 434-residue chain is Eukaryotic translation initiation factor 3 subunit E (434 aa).

The 174-residue stretch at 219–392 (FFNHPKGRDL…GHVVMGTQPL (174 aa)) folds into the PCI domain.

It belongs to the eIF-3 subunit E family. Component of the eukaryotic translation initiation factor 3 (eIF-3) complex. The eIF-3 complex interacts with pix. Interacts with mxt.

The protein resides in the cytoplasm. Functionally, component of the eukaryotic translation initiation factor 3 (eIF-3) complex, which is involved in protein synthesis of a specialized repertoire of mRNAs and, together with other initiation factors, stimulates binding of mRNA and methionyl-tRNAi to the 40S ribosome. The eIF-3 complex specifically targets and initiates translation of a subset of mRNAs involved in cell proliferation. The polypeptide is Eukaryotic translation initiation factor 3 subunit E (eIF3-S6) (Drosophila ananassae (Fruit fly)).